A 501-amino-acid chain; its full sequence is Prostacyclin synthase (501 aa).

Residues 1 to 21 (MSWAALLGLLAVLLLLLLLLS) traverse the membrane as a helical segment. Residues Arg107, Leu113, Asn288, 359–360 (TR), and Arg383 contribute to the substrate site. Residue Cys442 participates in heme binding.

The protein belongs to the cytochrome P450 family. Requires heme as cofactor.

It is found in the endoplasmic reticulum membrane. It catalyses the reaction prostaglandin H2 = prostaglandin I2. The catalysed reaction is a hydroperoxyeicosatetraenoate = an oxoeicosatetraenoate + H2O. The enzyme catalyses (15S)-hydroperoxy-(5Z,8Z,11Z,13E)-eicosatetraenoate = 15-oxo-(5Z,8Z,11Z,13E)-eicosatetraenoate + H2O. It carries out the reaction (15S)-hydroperoxy-(5Z,8Z,11Z,13E)-eicosatetraenoate + AH2 = (15S)-hydroxy-(5Z,8Z,11Z,13E)-eicosatetraenoate + A + H2O. Functionally, catalyzes the biosynthesis and metabolism of eicosanoids. Catalyzes the isomerization of prostaglandin H2 to prostacyclin (= prostaglandin I2), a potent mediator of vasodilation and inhibitor of platelet aggregation. Additionally, displays dehydratase activity, toward hydroperoxyeicosatetraenoates (HPETEs), especially toward (15S)-hydroperoxy-(5Z,8Z,11Z,13E)-eicosatetraenoate (15(S)-HPETE). This is Prostacyclin synthase (Ptgis) from Rattus norvegicus (Rat).